We begin with the raw amino-acid sequence, 316 residues long: Ribosomal RNA small subunit methyltransferase H (316 aa).

S-adenosyl-L-methionine is bound by residues alanine 35–histidine 37, aspartate 55, phenylalanine 84, aspartate 105, and glutamine 112.

The protein belongs to the methyltransferase superfamily. RsmH family.

It localises to the cytoplasm. It carries out the reaction cytidine(1402) in 16S rRNA + S-adenosyl-L-methionine = N(4)-methylcytidine(1402) in 16S rRNA + S-adenosyl-L-homocysteine + H(+). Its function is as follows. Specifically methylates the N4 position of cytidine in position 1402 (C1402) of 16S rRNA. The protein is Ribosomal RNA small subunit methyltransferase H of Streptococcus pneumoniae (strain Taiwan19F-14).